A 545-amino-acid chain; its full sequence is B3 domain-containing protein Os03g0620500 (545 aa).

Residues 26–119 (MKCFHRQMSA…RRASGVQERN (94 aa)) constitute a DNA-binding region (TF-B3 1). A disordered region spans residues 111-188 (RASGVQERNA…SSSEHESSYD (78 aa)). Basic and acidic residues predominate over residues 173–186 (EEAKESSSSEHESS). The segment at residues 231-331 (VTTMKHSNVN…RATVHLLRET (101 aa)) is a DNA-binding region (TF-B3 2). The segment at 368 to 400 (RRGTMEPSTTNVKKEADNEQCNNGQGKRQEPLN) is disordered. A DNA-binding region (TF-B3 3) is located at residues 441 to 542 (YVSIMNKSNV…AMKVHIIRHN (102 aa)).

It is found in the nucleus. The protein is B3 domain-containing protein Os03g0620500 of Oryza sativa subsp. japonica (Rice).